The following is a 247-amino-acid chain: UPF0259 membrane protein BU276 (247 aa).

6 helical membrane-spanning segments follow: residues 20–40 (IGAIFFISIFATFMNILIDMF), 85–105 (IMESLISKTTLLGSIIILISV), 114–134 (IVSSIRTFFLFFPSLFILNFL), 137–157 (FIIQIGFMLLIIPGILLSIIL), 188–208 (IIGPGVLFWMCGKFILTMLLA), and 218–238 (LFLISNISMNILFSILIIYLF).

The protein belongs to the UPF0259 family.

The protein resides in the cell membrane. This chain is UPF0259 membrane protein BU276, found in Buchnera aphidicola subsp. Acyrthosiphon pisum (strain APS) (Acyrthosiphon pisum symbiotic bacterium).